The sequence spans 208 residues: Large ribosomal subunit protein uL3 (208 aa).

A disordered region spans residues 116–148 (GFQGVIKRHGQSRGPMAHGSRYHRRPGSMGPVA).

This sequence belongs to the universal ribosomal protein uL3 family. As to quaternary structure, part of the 50S ribosomal subunit. Forms a cluster with proteins L14 and L19.

One of the primary rRNA binding proteins, it binds directly near the 3'-end of the 23S rRNA, where it nucleates assembly of the 50S subunit. This Streptococcus pneumoniae (strain Hungary19A-6) protein is Large ribosomal subunit protein uL3.